The primary structure comprises 645 residues: Exoribonuclease 2 (645 aa).

The RNB domain maps to 191-517 (REDLTELNFI…MNHRLLKALI (327 aa)). Residues 563 to 645 (HIRYSAEIID…DNRSIIAKIV (83 aa)) enclose the S1 motif domain.

It belongs to the RNR ribonuclease family. RNase II subfamily.

The protein localises to the cytoplasm. It catalyses the reaction Exonucleolytic cleavage in the 3'- to 5'-direction to yield nucleoside 5'-phosphates.. Involved in mRNA degradation. Hydrolyzes single-stranded polyribonucleotides processively in the 3' to 5' direction. This Baumannia cicadellinicola subsp. Homalodisca coagulata protein is Exoribonuclease 2.